Here is a 5202-residue protein sequence, read N- to C-terminus: Usherin (5202 aa).

The first 31 residues, 1-31 (MNCPVLSLGSGFLFQVIEMLIFAYFASISLT), serve as a signal peptide directing secretion. The Extracellular segment spans residues 32-5042 (ESRGLFPRLE…KSTEFYSELW (5011 aa)). A Laminin N-terminal domain is found at 271 to 517 (QDFRLYQVAL…AVDEITISGR (247 aa)). 2 N-linked (GlcNAc...) asparagine glycosylation sites follow: N361 and N451. Cystine bridges form between C518–C527, C520–C536, C538–C549, C552–C572, C575–C584, C577–C605, C608–C617, C620–C638, C641–C655, C643–C662, C664–C673, C676–C691, C694–C708, C696–C715, C717–C726, C729–C744, C747–C759, C749–C766, C768–C777, C780–C792, C795–C808, C797–C815, C817–C826, C829–C844, C847–C861, C849–C868, C870–C879, C882–C897, C900–C913, C902–C920, C922–C931, C934–C948, C951–C963, C953–C970, C972–C982, C985–C999, C1002–C1014, C1004–C1021, C1023–C1032, and C1035–C1050. Laminin EGF-like domains lie at 518–574 (CQCH…NCKP), 575–640 (CQCN…VCKP), 641–693 (CDCD…GCSP), 694–746 (CNCN…GCEP), 747–794 (CQCN…NCKA), 795–846 (CDCD…LCLP), 847–899 (CNCD…HCQM), 900–950 (CECD…GCLP), 951–1001 (CSCH…RCQP), and 1002–1052 (CNCH…GCSK). N-linked (GlcNAc...) asparagine glycosylation is found at N587 and N611. The N-linked (GlcNAc...) asparagine glycan is linked to N650. A glycan (N-linked (GlcNAc...) asparagine) is linked at N697. 3 N-linked (GlcNAc...) asparagine glycosylation sites follow: N839, N856, and N862. A glycan (N-linked (GlcNAc...) asparagine) is linked at N888. An N-linked (GlcNAc...) asparagine glycan is attached at N944. N-linked (GlcNAc...) asparagine glycosylation is present at N1011. Fibronectin type-III domains lie at 1058–1146 (PPPR…TKPG), 1148–1244 (PEGN…APPQ), 1245–1363 (RLSP…SAPV), and 1364–1468 (FMIP…AAPA). N-linked (GlcNAc...) asparagine glycans are attached at residues N1071, N1151, and N1174. N-linked (GlcNAc...) asparagine glycosylation is found at N1379, N1388, N1479, and N1635. Laminin G-like domains follow at residues 1517–1709 (MKGI…WEGC) and 1714–1891 (NEGA…LDGC). A disulfide bridge links C1672 with C1709. N-linked (GlcNAc...) asparagine glycosylation occurs at N1779. C1862 and C1891 are joined by a disulfide. Fibronectin type-III domains lie at 1869–1955 (TRGA…AAPQ), 1957–2054 (VPTP…TPQE), 2055–2144 (APQE…LPPE), 2145–2239 (HVDS…TDED), 2243–2330 (GVPA…APPE), 2331–2433 (GTVN…MPPG), 2437–2531 (GVLP…TAED), 2535–2622 (PVVP…TLPG), 2624–2722 (PEGI…TRPS), 2726–2819 (GVQP…THPT), 2820–2923 (VPQN…TLAG), 2927–3018 (RGAN…TCDG), 3022–3112 (GMLP…TPSD), and 3113–3209 (IPTP…CCEE). N-linked (GlcNAc...) asparagine glycans are attached at residues N1903, N2011, N2014, N2048, N2130, N2182, N2195, N2258, N2285, N2322, N2377, N2382, N2407, and N2413. 6 N-linked (GlcNAc...) asparagine glycosylation sites follow: N2581, N2584, N2656, N2710, N2770, and N2788. N2930, N2937, N2970, N3032, and N3099 each carry an N-linked (GlcNAc...) asparagine glycan. Residues N3217, N3330, N3419, and N3433 are each glycosylated (N-linked (GlcNAc...) asparagine). 2 cysteine pairs are disulfide-bonded: C3371–C3444 and C3399–C3425. 16 consecutive Fibronectin type-III domains span residues 3403 to 3497 (CPAS…TKED), 3501 to 3589 (GVSP…TQGV), 3592 to 3682 (SILP…AAPE), 3684 to 3770 (VWVT…TPMS), 3774 to 3865 (EIYP…TPEA), 3866 to 3963 (APMD…TLEA), 3964 to 4067 (PPQD…SSPS), 4068 to 4153 (GLRN…TDEA), 4157 to 4261 (SQLA…TLQA), 4262 to 4357 (PPEG…AAPS), 4358 to 4445 (EVSP…ALPE), 4446 to 4530 (NMDS…TSPS), 4534 to 4630 (GMEP…TPEI), 4636 to 4733 (PPPH…TGPA), 4734 to 4827 (PPEG…THPA), and 4828 to 4927 (PPSG…SFTT). Residues N3653, N3694, N3733, N3780, and N3849 are each glycosylated (N-linked (GlcNAc...) asparagine). N3984 carries N-linked (GlcNAc...) asparagine glycosylation. N-linked (GlcNAc...) asparagine glycosylation is found at N4202, N4226, N4317, and N4418. Positions 4518 to 4541 (ILSPLVKDRTSPSAPSGMEPPKLQ) are disordered. N-linked (GlcNAc...) asparagine glycans are attached at residues N4564, N4583, N4691, N4754, and N4800. 2 N-linked (GlcNAc...) asparagine glycosylation sites follow: N4943 and N4950. Residues 5043-5063 (FIVLMAMLGLILLAIFLSLIL) form a helical membrane-spanning segment. Over 5064–5202 (QRKIHKEPYI…ERTTFTDTHL (139 aa)) the chain is Cytoplasmic. The PDZ-binding signature appears at 5200-5202 (THL).

In terms of assembly, interacts with collagen IV and fibronectin via its laminin EGF-like domains. Interaction with collagen may be required for stable integration into the basement membrane. Interacts with NINL. Interacts with USH1C. Component of USH2 complex, composed of ADGRV1, PDZD7, USH2A and WHRN. Interacts with ADGRV1/MASS1 (via N-terminal PDZ domain). Interacts (via the cytoplasmic region) with WHRN. Interacts (via the cytoplasmic region) with PDZD7. Interacts (via the cytoplasmic region) with VEZT and MYO7A (via MyTH4-FERM domains); the interaction associates VEZT with the USH2 complex at the stereocilia base. In terms of tissue distribution, present in the basement membrane of many, but not all tissues. Expressed in retina, cochlea, small and large intestine, pancreas, bladder, prostate, esophagus, trachea, thymus, salivary glands, placenta, ovary, fallopian tube, uterus and testis. Absent in many other tissues such as heart, lung, liver, kidney and brain. In the retina, it is present in the basement membranes in the Bruch's layer choroid capillary basement membranes, where it localizes just beneath the retinal pigment epithelial cells (at protein level). Weakly expressed. Isoform 2 is expressed in fetal eye, cochlea and heart, and at very low level in brain, CNS, intestine, skeleton, tongue, kidney and lung. Isoform 2 is not expressed in stomach and liver. In adult tissues, isoform 2 is expressed in neural retina and testis, and at low level in brain, heart, kidney and liver. Isoform 1 displays a similar pattern of expression but is expressed at very low level in fetal cochlea.

It localises to the cell projection. The protein resides in the stereocilium membrane. Its subcellular location is the secreted. In terms of biological role, involved in hearing and vision as member of the USH2 complex. In the inner ear, required for the maintenance of the hair bundle ankle formation, which connects growing stereocilia in developing cochlear hair cells. In retina photoreceptors, the USH2 complex is required for the maintenance of periciliary membrane complex that seems to play a role in regulating intracellular protein transport. The polypeptide is Usherin (USH2A) (Homo sapiens (Human)).